We begin with the raw amino-acid sequence, 412 residues long: Tryptophan synthase beta chain 1 (412 aa).

At Lys-103 the chain carries N6-(pyridoxal phosphate)lysine.

The protein belongs to the TrpB family. Tetramer of two alpha and two beta chains. The cofactor is pyridoxal 5'-phosphate.

It carries out the reaction (1S,2R)-1-C-(indol-3-yl)glycerol 3-phosphate + L-serine = D-glyceraldehyde 3-phosphate + L-tryptophan + H2O. It participates in amino-acid biosynthesis; L-tryptophan biosynthesis; L-tryptophan from chorismate: step 5/5. Its function is as follows. The beta subunit is responsible for the synthesis of L-tryptophan from indole and L-serine. In Chlamydia caviae (strain ATCC VR-813 / DSM 19441 / 03DC25 / GPIC) (Chlamydophila caviae), this protein is Tryptophan synthase beta chain 1 (trpB1).